A 512-amino-acid polypeptide reads, in one-letter code: MRTIEIFDTTLRDGEQSPGVNISTNEKVEIALQLEKLGVNRMEAGFAAASPGDQKSVAEVAKRVKNATVVSLARAVKDDMDKAYEALRNAQNASLHVFLATSPIHRQFKLNMSKEEVLARAVEAVTYAKKYFTEVQFSAEDAARTEIDFLAEVVEAVIKAGATTVNIPDTVGYMTPYQYGNIFRELKKRVPSTDLIRLSCHCHDDLGMAVANSLAAVEGGATQVEGTINGIGERAGNAALEEVALALETRKDYYQATTKLNLKEIARTSQLVSRLTGMIVPGNKAVVGANAFAHESGIHQDGVLKEVTTYEIIRPESVGFKSNKLVLGKHSGRHAFKEKLVDLGYHLEQEEVNAAFAAFKVLCDKKKEITDDDILALVDSKMVRGPEAFQLESVQLAYGNISVPTASVRLVRADGSVCEEAACGNGSVDSIYKAIDRATGEEVSLVDYKILSVTHGQDALGEVFVRLQQDDLIVTGRGVSTDVLEASAIAYVRAVNKIMERRGEPTPVSATI.

Residues 4 to 266 (IEIFDTTLRD…TTKLNLKEIA (263 aa)) enclose the Pyruvate carboxyltransferase domain. Positions 13, 201, 203, and 237 each coordinate Mn(2+). The segment at 390-512 (QLESVQLAYG…GEPTPVSATI (123 aa)) is regulatory domain.

This sequence belongs to the alpha-IPM synthase/homocitrate synthase family. LeuA type 1 subfamily. In terms of assembly, homodimer. Requires Mn(2+) as cofactor.

The protein resides in the cytoplasm. The enzyme catalyses 3-methyl-2-oxobutanoate + acetyl-CoA + H2O = (2S)-2-isopropylmalate + CoA + H(+). It participates in amino-acid biosynthesis; L-leucine biosynthesis; L-leucine from 3-methyl-2-oxobutanoate: step 1/4. In terms of biological role, catalyzes the condensation of the acetyl group of acetyl-CoA with 3-methyl-2-oxobutanoate (2-ketoisovalerate) to form 3-carboxy-3-hydroxy-4-methylpentanoate (2-isopropylmalate). In Brevibacillus brevis (strain 47 / JCM 6285 / NBRC 100599), this protein is 2-isopropylmalate synthase.